The chain runs to 380 residues: Mitogen-activated protein kinase 3 (380 aa).

Residue Ala2 is modified to N-acetylalanine. A Protein kinase domain is found at 43–331; the sequence is YTQLQYIGEG…VEEALAHPYL (289 aa). ATP is bound by residues 49–57 and Lys72; that span reads IGEGAYGMV. Asp167 (proton acceptor) is an active-site residue. At Thr199 the chain carries Phosphothreonine. Phosphothreonine; by MAP2K1 and MAP2K2 is present on Thr203. The TXY motif lies at 203–205; that stretch reads TEY. Tyr205 is subject to Phosphotyrosine; by MAP2K1 and MAP2K2. Thr208 is subject to Phosphothreonine; by autocatalysis.

The protein belongs to the protein kinase superfamily. CMGC Ser/Thr protein kinase family. MAP kinase subfamily. In terms of assembly, binds both upstream activators and downstream substrates in multimolecular complexes. Found in a complex with at least BRAF, HRAS, MAP2K1/MEK1, MAPK3 and RGS14. Interacts with ADAM15, ARRB2, CANX, DAPK1 (via death domain), HSF4, IER3, MAP2K1/MEK1, MORG1, NISCH, PEA15, SGK1 and MKNK2. MKNK2 isoform 1 binding prevents from dephosphorylation and inactivation. Interacts with TPR. Interacts with HSF1 (via D domain and preferentially with hyperphosphorylated form); this interaction occurs upon heat shock. Interacts with CDKN2AIP. Interacts with CAVIN4. Interacts with GIT1; this interaction is necessary for MAPK3 localization to focal adhesions. Interacts with ZNF263. Interacts with EBF4. It depends on Mg(2+) as a cofactor. In terms of processing, phosphorylated upon FLT3 and KIT signaling. Ligand-activated ALK induces tyrosine phosphorylation. Dephosphorylated by PTPRJ at Tyr-205. Dually phosphorylated on Thr-203 and Tyr-205, which activates the enzyme. Post-translationally, ubiquitinated by TRIM15 via 'Lys-63'-linked ubiquitination; leading to activation. Deubiquitinated by CYLD. Highest levels within the nervous system, expressed in different tissues, mostly in intestine, placenta and lung.

The protein localises to the cytoplasm. Its subcellular location is the nucleus. The protein resides in the membrane. It is found in the caveola. It localises to the cell junction. The protein localises to the focal adhesion. It carries out the reaction L-seryl-[protein] + ATP = O-phospho-L-seryl-[protein] + ADP + H(+). It catalyses the reaction L-threonyl-[protein] + ATP = O-phospho-L-threonyl-[protein] + ADP + H(+). With respect to regulation, phosphorylated by MAP2K1/MEK1 and MAP2K2/MEK2 on Thr-203 and Tyr-205 in response to external stimuli like insulin or NGF. Both phosphorylations are required for activity. This phosphorylation causes dramatic conformational changes, which enable full activation and interaction of MAPK1/ERK2 with its substrates. Dephosphorylated and inactivated by DUSP3, DUSP6 and DUSP9. Its function is as follows. Serine/threonine kinase which acts as an essential component of the MAP kinase signal transduction pathway. MAPK1/ERK2 and MAPK3/ERK1 are the 2 MAPKs which play an important role in the MAPK/ERK cascade. They participate also in a signaling cascade initiated by activated KIT and KITLG/SCF. Depending on the cellular context, the MAPK/ERK cascade mediates diverse biological functions such as cell growth, adhesion, survival and differentiation through the regulation of transcription, translation, cytoskeletal rearrangements. The MAPK/ERK cascade also plays a role in initiation and regulation of meiosis, mitosis, and postmitotic functions in differentiated cells by phosphorylating a number of transcription factors. About 160 substrates have already been discovered for ERKs. Many of these substrates are localized in the nucleus, and seem to participate in the regulation of transcription upon stimulation. However, other substrates are found in the cytosol as well as in other cellular organelles, and those are responsible for processes such as translation, mitosis and apoptosis. Moreover, the MAPK/ERK cascade is also involved in the regulation of the endosomal dynamics, including lysosome processing and endosome cycling through the perinuclear recycling compartment (PNRC); as well as in the fragmentation of the Golgi apparatus during mitosis. The substrates include transcription factors (such as ATF2, BCL6, ELK1, ERF, FOS, HSF4 or SPZ1), cytoskeletal elements (such as CANX, CTTN, GJA1, MAP2, MAPT, PXN, SORBS3 or STMN1), regulators of apoptosis (such as BAD, BTG2, CASP9, DAPK1, IER3, MCL1 or PPARG), regulators of translation (such as EIF4EBP1) and a variety of other signaling-related molecules (like ARHGEF2, DEPTOR, FRS2 or GRB10). Protein kinases (such as RAF1, RPS6KA1/RSK1, RPS6KA3/RSK2, RPS6KA2/RSK3, RPS6KA6/RSK4, SYK, MKNK1/MNK1, MKNK2/MNK2, RPS6KA5/MSK1, RPS6KA4/MSK2, MAPKAPK3 or MAPKAPK5) and phosphatases (such as DUSP1, DUSP4, DUSP6 or DUSP16) are other substrates which enable the propagation the MAPK/ERK signal to additional cytosolic and nuclear targets, thereby extending the specificity of the cascade. The chain is Mitogen-activated protein kinase 3 (Mapk3) from Rattus norvegicus (Rat).